Reading from the N-terminus, the 145-residue chain is uncharacterized protein (145 aa).

The chain crosses the membrane as a helical span at residues 97–117 (ISMLLLIVIIAIGLTISYMVI).

The protein resides in the membrane. This is an uncharacterized protein from Methanocaldococcus jannaschii (strain ATCC 43067 / DSM 2661 / JAL-1 / JCM 10045 / NBRC 100440) (Methanococcus jannaschii).